The chain runs to 165 residues: Methylated-DNA--protein-cysteine methyltransferase (165 aa).

C126 functions as the Nucleophile; methyl group acceptor in the catalytic mechanism.

The protein belongs to the MGMT family.

Its subcellular location is the cytoplasm. It carries out the reaction a 6-O-methyl-2'-deoxyguanosine in DNA + L-cysteinyl-[protein] = S-methyl-L-cysteinyl-[protein] + a 2'-deoxyguanosine in DNA. The enzyme catalyses a 4-O-methyl-thymidine in DNA + L-cysteinyl-[protein] = a thymidine in DNA + S-methyl-L-cysteinyl-[protein]. Involved in the cellular defense against the biological effects of O6-methylguanine (O6-MeG) and O4-methylthymine (O4-MeT) in DNA. Repairs the methylated nucleobase in DNA by stoichiometrically transferring the methyl group to a cysteine residue in the enzyme. This is a suicide reaction: the enzyme is irreversibly inactivated. The sequence is that of Methylated-DNA--protein-cysteine methyltransferase from Mycolicibacterium paratuberculosis (strain ATCC BAA-968 / K-10) (Mycobacterium paratuberculosis).